We begin with the raw amino-acid sequence, 371 residues long: S-adenosylmethionine:tRNA ribosyltransferase-isomerase (371 aa).

It belongs to the QueA family. As to quaternary structure, monomer.

Its subcellular location is the cytoplasm. It carries out the reaction 7-aminomethyl-7-carbaguanosine(34) in tRNA + S-adenosyl-L-methionine = epoxyqueuosine(34) in tRNA + adenine + L-methionine + 2 H(+). The protein operates within tRNA modification; tRNA-queuosine biosynthesis. In terms of biological role, transfers and isomerizes the ribose moiety from AdoMet to the 7-aminomethyl group of 7-deazaguanine (preQ1-tRNA) to give epoxyqueuosine (oQ-tRNA). The protein is S-adenosylmethionine:tRNA ribosyltransferase-isomerase of Nitratidesulfovibrio vulgaris (strain ATCC 29579 / DSM 644 / CCUG 34227 / NCIMB 8303 / VKM B-1760 / Hildenborough) (Desulfovibrio vulgaris).